A 209-amino-acid polypeptide reads, in one-letter code: Dof zinc finger protein DOF1.6 (209 aa).

Residues 1-17 (MPSEPNQTRPTRVQPST) are compositionally biased toward polar residues. The interval 1-29 (MPSEPNQTRPTRVQPSTAAYPPPNLAEPL) is disordered. The span at 20–29 (YPPPNLAEPL) shows a compositional bias: pro residues. Residues 29-83 (LPCPRCNSTTTKFCYYNNYNLAQPRYYCKSCRRYWTQGGTLRDVPVGGGTRRSSS) form a Dof-type zinc finger. Residues Cys31, Cys34, Cys56, and Cys59 each contribute to the Zn(2+) site. A disordered region spans residues 70–116 (RDVPVGGGTRRSSSKRHRSFSTTATSSSSSSSVITTTTQEPATTEAS). The segment covering 89–116 (FSTTATSSSSSSSVITTTTQEPATTEAS) has biased composition (low complexity).

It is found in the nucleus. Transcription factor that binds specifically to a 5'-AA[AG]G-3' consensus core sequence. This chain is Dof zinc finger protein DOF1.6 (DOF1.6), found in Arabidopsis thaliana (Mouse-ear cress).